The sequence spans 215 residues: Proapoptotic nucleolar protein 1 (215 aa).

The disordered stretch occupies residues 35 to 215 (RKGTPTARCL…RLPAPRSAST (181 aa)). Over residues 169–180 (PRPPQHLSPPQP) the composition is skewed to pro residues. Residues 185–215 (MGAAEGSRRADTHHARRRRRARLPAPRSAST) form a necessary for nucleolar localization region.

As to expression, widely expressed.

Its subcellular location is the nucleus. It is found in the nucleolus. Functionally, apoptosis-inducing protein that modulates the tumor suppressor function of CDKN2A/p14ARF. Enhances the stability of CDKN2A/p14ARF protein by protecting it from degradation. May act as a tumor suppressor. The polypeptide is Proapoptotic nucleolar protein 1 (Homo sapiens (Human)).